The sequence spans 841 residues: DNA ligase (841 aa).

NAD(+)-binding positions include 33–37 (DAQYD), 82–83 (SL), and Glu-114. Catalysis depends on Lys-116, which acts as the N6-AMP-lysine intermediate. Positions 137, 174, 300, and 324 each coordinate NAD(+). Zn(2+) is bound by residues Cys-418, Cys-421, Cys-436, and Cys-442. Positions 758 to 841 (EKTGPLDGQT…AFLGEHGQQR (84 aa)) constitute a BRCT domain.

This sequence belongs to the NAD-dependent DNA ligase family. LigA subfamily. Mg(2+) serves as cofactor. Mn(2+) is required as a cofactor.

It catalyses the reaction NAD(+) + (deoxyribonucleotide)n-3'-hydroxyl + 5'-phospho-(deoxyribonucleotide)m = (deoxyribonucleotide)n+m + AMP + beta-nicotinamide D-nucleotide.. DNA ligase that catalyzes the formation of phosphodiester linkages between 5'-phosphoryl and 3'-hydroxyl groups in double-stranded DNA using NAD as a coenzyme and as the energy source for the reaction. It is essential for DNA replication and repair of damaged DNA. In Xanthomonas oryzae pv. oryzae (strain MAFF 311018), this protein is DNA ligase.